The primary structure comprises 211 residues: ATP phosphoribosyltransferase (211 aa).

Belongs to the ATP phosphoribosyltransferase family. Short subfamily. As to quaternary structure, heteromultimer composed of HisG and HisZ subunits.

The protein resides in the cytoplasm. The enzyme catalyses 1-(5-phospho-beta-D-ribosyl)-ATP + diphosphate = 5-phospho-alpha-D-ribose 1-diphosphate + ATP. It participates in amino-acid biosynthesis; L-histidine biosynthesis; L-histidine from 5-phospho-alpha-D-ribose 1-diphosphate: step 1/9. Functionally, catalyzes the condensation of ATP and 5-phosphoribose 1-diphosphate to form N'-(5'-phosphoribosyl)-ATP (PR-ATP). Has a crucial role in the pathway because the rate of histidine biosynthesis seems to be controlled primarily by regulation of HisG enzymatic activity. The protein is ATP phosphoribosyltransferase of Rippkaea orientalis (strain PCC 8801 / RF-1) (Cyanothece sp. (strain PCC 8801)).